Reading from the N-terminus, the 102-residue chain is Large ribosomal subunit protein bL21 (102 aa).

This sequence belongs to the bacterial ribosomal protein bL21 family. As to quaternary structure, part of the 50S ribosomal subunit. Contacts protein L20.

Its function is as follows. This protein binds to 23S rRNA in the presence of protein L20. This chain is Large ribosomal subunit protein bL21, found in Oleidesulfovibrio alaskensis (strain ATCC BAA-1058 / DSM 17464 / G20) (Desulfovibrio alaskensis).